Here is an 83-residue protein sequence, read N- to C-terminus: Cytochrome b559 subunit alpha (83 aa).

The chain crosses the membrane as a helical span at residues 21–35 (VIHSITIPSLFIAGW). His23 contacts heme.

Belongs to the PsbE/PsbF family. Heterodimer of an alpha subunit and a beta subunit. PSII is composed of 1 copy each of membrane proteins PsbA, PsbB, PsbC, PsbD, PsbE, PsbF, PsbH, PsbI, PsbJ, PsbK, PsbL, PsbM, PsbT, PsbX, PsbY, PsbZ, Psb30/Ycf12, at least 3 peripheral proteins of the oxygen-evolving complex and a large number of cofactors. It forms dimeric complexes. Heme b is required as a cofactor.

The protein localises to the plastid. It localises to the chloroplast thylakoid membrane. Functionally, this b-type cytochrome is tightly associated with the reaction center of photosystem II (PSII). PSII is a light-driven water:plastoquinone oxidoreductase that uses light energy to abstract electrons from H(2)O, generating O(2) and a proton gradient subsequently used for ATP formation. It consists of a core antenna complex that captures photons, and an electron transfer chain that converts photonic excitation into a charge separation. The polypeptide is Cytochrome b559 subunit alpha (Anthoceros angustus (Hornwort)).